Here is a 149-residue protein sequence, read N- to C-terminus: Large ribosomal subunit protein uL24 (149 aa).

It belongs to the universal ribosomal protein uL24 family. As to quaternary structure, part of the 50S ribosomal subunit.

Its function is as follows. One of two assembly initiator proteins, it binds directly to the 5'-end of the 23S rRNA, where it nucleates assembly of the 50S subunit. One of the proteins that surrounds the polypeptide exit tunnel on the outside of the subunit. This is Large ribosomal subunit protein uL24 from Nostoc sp. (strain PCC 7120 / SAG 25.82 / UTEX 2576).